We begin with the raw amino-acid sequence, 326 residues long: Acetyl-coenzyme A carboxylase carboxyl transferase subunit alpha (326 aa).

Residues 44-298 (KLETRAMQLR…KQALLDNLDE (255 aa)) enclose the CoA carboxyltransferase C-terminal domain.

The protein belongs to the AccA family. Acetyl-CoA carboxylase is a heterohexamer composed of biotin carboxyl carrier protein (AccB), biotin carboxylase (AccC) and two subunits each of ACCase subunit alpha (AccA) and ACCase subunit beta (AccD).

The protein resides in the cytoplasm. It carries out the reaction N(6)-carboxybiotinyl-L-lysyl-[protein] + acetyl-CoA = N(6)-biotinyl-L-lysyl-[protein] + malonyl-CoA. The protein operates within lipid metabolism; malonyl-CoA biosynthesis; malonyl-CoA from acetyl-CoA: step 1/1. Component of the acetyl coenzyme A carboxylase (ACC) complex. First, biotin carboxylase catalyzes the carboxylation of biotin on its carrier protein (BCCP) and then the CO(2) group is transferred by the carboxyltransferase to acetyl-CoA to form malonyl-CoA. The chain is Acetyl-coenzyme A carboxylase carboxyl transferase subunit alpha from Nostoc sp. (strain PCC 7120 / SAG 25.82 / UTEX 2576).